Here is a 49-residue protein sequence, read N- to C-terminus: Large ribosomal subunit protein bL33A (49 aa).

The protein belongs to the bacterial ribosomal protein bL33 family.

This is Large ribosomal subunit protein bL33A from Lactobacillus johnsonii (strain CNCM I-12250 / La1 / NCC 533).